Consider the following 559-residue polypeptide: MLTKNTNNFSNSSNDPLNLYLNKNYAALANSDLTKKIDSDGNTVVHKMAKNLDHDAFDSILKHNPTAFKYNVINTANKRSELPIHKAMETLQSGGDPDHGFIDYLINGLGANPNVPDASGRTITQVNPTTYNPTNPTGSTNVPGITHLPSNAVNDQSVKQLNDQVIKNIRNLAKTAEDNINKISPKLGQSLRDKGVTPDSITNAAKNVVDRMPMIDKFFGKQTANQVGTVSQVTGGDNNVEFLRQLTNHYSTLRGGRSTSDRSDMNRYDSFVAKNKNSILNNYDRQYNDTFSSTGGKANKKLGDINTEDINNLFTDDAQNENSDNSMNTWGGAKKTYGNKSRSNDNSDNNDDSDDSERDIIDRRQTTKYQNMFSSQERPRERNTKVDEIYRSFVKKIMDLLGVDEETAKLYRSAIKIDIGNKNPELRKWENDELKIQEMEKIFNNKQSLQNALDKIDMDQIKSEMSRRRDESNKRRDEKRKDREEKRRQKRSQRSDTRKQGIDSVTSDEATSDQTQSTDSNNTTQTASKKRTRKSTTSQSRVGPNNYLRSEDIIISTEN.

2 disordered regions span residues 315-360 and 454-559; these read TDDA…ERDI and DKID…STEN. Positions 320 to 329 are enriched in polar residues; the sequence is NENSDNSMNT. Over residues 348–357 the composition is skewed to acidic residues; it reads DNNDDSDDSE. Residues 433–495 are a coiled coil; that stretch reads ELKIQEMEKI…KRRQKRSQRS (63 aa). Basic and acidic residues predominate over residues 454 to 501; the sequence is DKIDMDQIKSEMSRRRDESNKRRDEKRKDREEKRRQKRSQRSDTRKQG. The span at 507–527 shows a compositional bias: low complexity; that stretch reads SDEATSDQTQSTDSNNTTQTA.

The protein resides in the virion. This is an uncharacterized protein from Acanthamoeba polyphaga mimivirus (APMV).